We begin with the raw amino-acid sequence, 730 residues long: Catalase-peroxidase (730 aa).

Positions 92 to 225 (WHSAGTYRSI…LSAVHMGLIY (134 aa)) form a cross-link, tryptophyl-tyrosyl-methioninium (Trp-Tyr) (with M-251). Residue His-93 is the Proton acceptor of the active site. The tryptophyl-tyrosyl-methioninium (Tyr-Met) (with W-92) cross-link spans 225–251 (YVNPEGPDGIPDPVASARDIRTTFRRM). Heme b is bound at residue His-266.

Belongs to the peroxidase family. Peroxidase/catalase subfamily. As to quaternary structure, homodimer or homotetramer. The cofactor is heme b. In terms of processing, formation of the three residue Trp-Tyr-Met cross-link is important for the catalase, but not the peroxidase activity of the enzyme.

It localises to the cytoplasm. The enzyme catalyses H2O2 + AH2 = A + 2 H2O. It catalyses the reaction 2 H2O2 = O2 + 2 H2O. Bifunctional enzyme with both catalase and broad-spectrum peroxidase activity. The sequence is that of Catalase-peroxidase from Blumeria hordei (Barley powdery mildew).